The primary structure comprises 479 residues: UDP-glycosyltransferase 84A3 (479 aa).

Catalysis depends on H19, which acts as the Proton acceptor. H19 serves as a coordination point for an anthocyanidin. UDP-alpha-D-glucose is bound by residues Q346, H361, W364, N365, S366, and E369. An an anthocyanidin-binding site is contributed by G384. Positions 385 and 386 each coordinate UDP-alpha-D-glucose.

This sequence belongs to the UDP-glycosyltransferase family.

The catalysed reaction is (E)-4-coumarate + UDP-alpha-D-glucose = 4-O-(beta-D-glucosyl)-trans-4-coumarate + UDP + H(+). It carries out the reaction (E)-ferulate + UDP-alpha-D-glucose = 1-O-[(E)-feruloyl]-beta-D-glucose + UDP. It catalyses the reaction (E)-caffeate + UDP-alpha-D-glucose = 1-O-[(E)-caffeoyl]-beta-D-glucose + UDP. The enzyme catalyses (E)-sinapate + UDP-alpha-D-glucose = 1-O-(trans-sinapoyl)-beta-D-glucose + UDP. The catalysed reaction is (E)-cinnamate + UDP-alpha-D-glucose = 1-O-(trans-cinnamoyl)-beta-D-glucose + UDP. Its function is as follows. UDP-glucosyltransferase that forms glucose esters with phenylpropanoids. Glucosylates 4-coumarate, ferulate, caffeate, sinapate and cinnamate. The chain is UDP-glycosyltransferase 84A3 from Arabidopsis thaliana (Mouse-ear cress).